Reading from the N-terminus, the 164-residue chain is Zinc finger A20 and AN1 domain-containing stress-associated protein 1 (164 aa).

The A20-type zinc finger occupies 16-50 (APEITLCANSCGFPGNPATQNLCQNCFLAATASTS). Zn(2+) contacts are provided by cysteine 22, cysteine 26, cysteine 38, and cysteine 41. A compositionally biased stretch (low complexity) spans 48-58 (STSSPSSLSSP). A disordered region spans residues 48–81 (STSSPSSLSSPVLDKQPPRPAAPLVEPQAPLPPP). The AN1-type zinc-finger motif lies at 99 to 145 (TSAVNRCSRCRKRVGLTGFRCRCGHLFCGEHRYSDRHGCSYDYKSAA). 8 residues coordinate Zn(2+): cysteine 105, cysteine 108, cysteine 119, cysteine 121, cysteine 126, histidine 129, histidine 135, and cysteine 137.

In terms of biological role, may be involved in environmental stress response. This Oryza sativa subsp. indica (Rice) protein is Zinc finger A20 and AN1 domain-containing stress-associated protein 1 (SAP1).